The sequence spans 145 residues: MFFGTFNHAIDAKGRTSLPAKFREALAAAGEPRIVLMQYPHWRAVQALPQSVWNELVKKVMEASPLDARWQRNVLKFVSSAHEVDLDVHGRVLVPPPLREWAGLQKDVVWVGMGRTIHLYDRAAYDEQMSAEIPADQVVDFFRTA.

2 SpoVT-AbrB domains span residues 5–50 (TFNH…ALPQ) and 81–124 (AHEV…DRAA).

It belongs to the MraZ family. Forms oligomers.

It is found in the cytoplasm. It localises to the nucleoid. The sequence is that of Transcriptional regulator MraZ from Anaeromyxobacter dehalogenans (strain 2CP-1 / ATCC BAA-258).